The sequence spans 562 residues: Isochorismate synthase 2, chloroplastic (562 aa).

Residues 1–55 constitute a chloroplast transit peptide; that stretch reads MASLQCSFHFLGTNPKKYNPSSIFQSYSRTSFTKLSSRVSRQRFLRCTLSMNGCE.

This sequence belongs to the isochorismate synthase family. Requires Mg(2+) as cofactor.

The protein localises to the plastid. Its subcellular location is the chloroplast. It carries out the reaction chorismate = isochorismate. It participates in siderophore biosynthesis; salicylate biosynthesis. In terms of biological role, isochorismate synthase involved in the synthesis of salicylic acid (SA) required for both local and systemic acquired resistance (LAR and SAR) while SA synthesized through the phenylalanine ammonium lyase (PAL) pathway seems to potentiate plant cell death. Also involved in phylloquinone (vitamin K1) synthesis. Has no isochorismate pyruvate lyase (IPL) activity. This chain is Isochorismate synthase 2, chloroplastic (ICS2), found in Arabidopsis thaliana (Mouse-ear cress).